A 345-amino-acid polypeptide reads, in one-letter code: Uroporphyrinogen decarboxylase (345 aa).

Residues 28–32 (RQAGR), D77, Y153, S208, and H322 each bind substrate.

Belongs to the uroporphyrinogen decarboxylase family. In terms of assembly, homodimer.

It localises to the cytoplasm. It carries out the reaction uroporphyrinogen III + 4 H(+) = coproporphyrinogen III + 4 CO2. The protein operates within porphyrin-containing compound metabolism; protoporphyrin-IX biosynthesis; coproporphyrinogen-III from 5-aminolevulinate: step 4/4. Its function is as follows. Catalyzes the decarboxylation of four acetate groups of uroporphyrinogen-III to yield coproporphyrinogen-III. This chain is Uroporphyrinogen decarboxylase, found in Solibacter usitatus (strain Ellin6076).